We begin with the raw amino-acid sequence, 194 residues long: Peptidyl-tRNA hydrolase (194 aa).

TRNA is bound at residue Tyr-17. The active-site Proton acceptor is the His-22. TRNA-binding residues include Phe-68, Asn-70, and Asn-116.

It belongs to the PTH family. As to quaternary structure, monomer.

Its subcellular location is the cytoplasm. It catalyses the reaction an N-acyl-L-alpha-aminoacyl-tRNA + H2O = an N-acyl-L-amino acid + a tRNA + H(+). Its function is as follows. Hydrolyzes ribosome-free peptidyl-tRNAs (with 1 or more amino acids incorporated), which drop off the ribosome during protein synthesis, or as a result of ribosome stalling. Functionally, catalyzes the release of premature peptidyl moieties from peptidyl-tRNA molecules trapped in stalled 50S ribosomal subunits, and thus maintains levels of free tRNAs and 50S ribosomes. The sequence is that of Peptidyl-tRNA hydrolase from Pasteurella multocida (strain Pm70).